The sequence spans 214 residues: Ras-related protein Rab-17 (214 aa).

At serine 29 the chain carries Phosphoserine. 4 residues coordinate GTP: glycine 31, lysine 32, threonine 33, and threonine 50. Residues threonine 33, threonine 50, and aspartate 73 each coordinate Mg(2+). Positions 43–54 (DFSNVLPTVGCA) match the Switch 1 motif. The short motif at 75-91 (AGQEKYQSVCHLYFRGA) is the Switch 2 element. Positions 76, 132, 133, 135, and 163 each coordinate GTP. Residues 183-204 (RAGDTGSSRPQEGEAVALNQEP) form a disordered region. 2 S-geranylgeranyl cysteine lipidation sites follow: cysteine 211 and cysteine 212.

The protein belongs to the small GTPase superfamily. Rab family. Mg(2+) serves as cofactor. As to expression, expressed in kidney, liver, and intestine mainly by epithelial cells. Expressed in hippocampus (at protein level).

The protein localises to the recycling endosome membrane. The protein resides in the melanosome. It localises to the cell projection. It is found in the dendrite. It catalyses the reaction GTP + H2O = GDP + phosphate + H(+). Its activity is regulated as follows. Regulated by guanine nucleotide exchange factors (GEFs) which promote the exchange of bound GDP for free GTP. Regulated by GTPase activating proteins (GAPs) which increase the GTP hydrolysis activity. Inhibited by GDP dissociation inhibitors (GDIs). Its function is as follows. The small GTPases Rab are key regulators of intracellular membrane trafficking, from the formation of transport vesicles to their fusion with membranes. Rabs cycle between an inactive GDP-bound form and an active GTP-bound form that is able to recruit to membranes different set of downstream effectors directly responsible for vesicle formation, movement, tethering and fusion. RAB17 is involved in transcytosis, the directed movement of endocytosed material through the cell and its exocytosis from the plasma membrane at the opposite side. Mainly observed in epithelial cells, transcytosis mediates, for instance, the transcellular transport of immunoglobulins from the basolateral surface to the apical surface. Most probably controls membrane trafficking through apical recycling endosomes in a post-endocytic step of transcytosis. Required for melanosome transport and release from melanocytes, it also regulates dendrite and dendritic spine development. May also play a role in cell migration. The chain is Ras-related protein Rab-17 from Mus musculus (Mouse).